Consider the following 426-residue polypeptide: MSFEITILGSSGGPLEGSTCSILLKPANISYHDIINDNLPDQVLCIDAGSGMGKLTEIIHQETTTKTSYCNFLQYYPDCETVSYYYHPNVTITTPFSNFQPGRPILHTQNIFNNLQNYLISHSHLDHVCSVVINSAGFNKNMSNKILYGSHYTINAMQQHLFNGKVWPNMPSFKIVNLNYLESNRSERIGIYTVKMFDLSHGEFNKLTEDKEDAQHHSNSNSNSNNIWGKRYDRRRSSITTIPQNTSGLIIKNSEALNHHYLSSAFLITLEVPCTTKEPPPSILVFGDFESDLTSKLSRNLFIWKSIASLILRNQLKAIVLECSNCKEIAANELYGHLTPKLLIYELKQLEHECKQLDTATTSTEQPLLGLNVIVNHVKEPIADPNQESQLHDPRKRILAELNKLNEIEKLGCNISIALSGTSIIV.

The interval 210–229 (DKEDAQHHSNSNSNSNNIWG) is disordered.

Belongs to the cyclic nucleotide phosphodiesterase class-II family.

It catalyses the reaction a nucleoside 3',5'-cyclic phosphate + H2O = a nucleoside 5'-phosphate + H(+). The protein is 3',5'-cyclic-nucleotide phosphodiesterase (PDE1) of Candida albicans (Yeast).